Consider the following 141-residue polypeptide: Large ribosomal subunit protein bL17 (141 aa).

It belongs to the bacterial ribosomal protein bL17 family. In terms of assembly, part of the 50S ribosomal subunit. Contacts protein L32.

The chain is Large ribosomal subunit protein bL17 from Gluconacetobacter diazotrophicus (strain ATCC 49037 / DSM 5601 / CCUG 37298 / CIP 103539 / LMG 7603 / PAl5).